Reading from the N-terminus, the 280-residue chain is Putative pyruvate, phosphate dikinase regulatory protein (280 aa).

158–165 (GVSRTSKT) contributes to the ADP binding site.

Belongs to the pyruvate, phosphate/water dikinase regulatory protein family. PDRP subfamily.

The enzyme catalyses N(tele)-phospho-L-histidyl/L-threonyl-[pyruvate, phosphate dikinase] + ADP = N(tele)-phospho-L-histidyl/O-phospho-L-threonyl-[pyruvate, phosphate dikinase] + AMP + H(+). The catalysed reaction is N(tele)-phospho-L-histidyl/O-phospho-L-threonyl-[pyruvate, phosphate dikinase] + phosphate + H(+) = N(tele)-phospho-L-histidyl/L-threonyl-[pyruvate, phosphate dikinase] + diphosphate. Its function is as follows. Bifunctional serine/threonine kinase and phosphorylase involved in the regulation of the pyruvate, phosphate dikinase (PPDK) by catalyzing its phosphorylation/dephosphorylation. In Lactobacillus johnsonii (strain CNCM I-12250 / La1 / NCC 533), this protein is Putative pyruvate, phosphate dikinase regulatory protein.